Reading from the N-terminus, the 367-residue chain is Chorismate synthase (367 aa).

Position 48 (Arg48) interacts with NADP(+). Residues 125-127 (RSS), 243-244 (NA), Gly283, 298-302 (KPTSS), and Arg324 contribute to the FMN site.

It belongs to the chorismate synthase family. Homotetramer. FMNH2 is required as a cofactor.

It carries out the reaction 5-O-(1-carboxyvinyl)-3-phosphoshikimate = chorismate + phosphate. Its pathway is metabolic intermediate biosynthesis; chorismate biosynthesis; chorismate from D-erythrose 4-phosphate and phosphoenolpyruvate: step 7/7. Its function is as follows. Catalyzes the anti-1,4-elimination of the C-3 phosphate and the C-6 proR hydrogen from 5-enolpyruvylshikimate-3-phosphate (EPSP) to yield chorismate, which is the branch point compound that serves as the starting substrate for the three terminal pathways of aromatic amino acid biosynthesis. This reaction introduces a second double bond into the aromatic ring system. The sequence is that of Chorismate synthase from Psychrobacter arcticus (strain DSM 17307 / VKM B-2377 / 273-4).